Here is a 243-residue protein sequence, read N- to C-terminus: 1-(5-phosphoribosyl)-5-[(5-phosphoribosylamino)methylideneamino] imidazole-4-carboxamide isomerase (243 aa).

Asp-14 serves as the catalytic Proton acceptor. The Proton donor role is filled by Asp-135.

It belongs to the HisA/HisF family.

It localises to the cytoplasm. It carries out the reaction 1-(5-phospho-beta-D-ribosyl)-5-[(5-phospho-beta-D-ribosylamino)methylideneamino]imidazole-4-carboxamide = 5-[(5-phospho-1-deoxy-D-ribulos-1-ylimino)methylamino]-1-(5-phospho-beta-D-ribosyl)imidazole-4-carboxamide. It functions in the pathway amino-acid biosynthesis; L-histidine biosynthesis; L-histidine from 5-phospho-alpha-D-ribose 1-diphosphate: step 4/9. This Rubrobacter xylanophilus (strain DSM 9941 / JCM 11954 / NBRC 16129 / PRD-1) protein is 1-(5-phosphoribosyl)-5-[(5-phosphoribosylamino)methylideneamino] imidazole-4-carboxamide isomerase.